A 511-amino-acid chain; its full sequence is Maturase K (511 aa).

Belongs to the intron maturase 2 family. MatK subfamily.

Its subcellular location is the plastid. It localises to the chloroplast. Usually encoded in the trnK tRNA gene intron. Probably assists in splicing its own and other chloroplast group II introns. The chain is Maturase K from Nandina domestica (Heavenly bamboo).